The following is a 28-amino-acid chain: Small integral membrane protein 47 (28 aa).

Residues 7 to 24 (VTLAMALFTILTSIYFFN) traverse the membrane as a helical segment.

The protein resides in the membrane. This Homo sapiens (Human) protein is Small integral membrane protein 47.